Consider the following 493-residue polypeptide: MSESELNISELKKVRLEKLAELKEMGIEPFGRRFERDSMAQNIKEAFSELEGKTIAIAGRIMSKRRHGKAGFANLADLSGSIQLYFRQDDLGPEKYELYKKLDIGDILGIQGEVFRTQKGEISIHVRDLYYLSKSLTPLPEKWHGLKDVELRYRQRYVDLIVNPEVKEVFVKRSRIIKEMRNYLDDRGFLEVETPMMQPIPGGATARPFITHHNALDMELYLRIAPELYLKRLIVGGLEKVYEINRNFRNEGISTRHNPEFTMLEIYQAYGDYEVMMQLCEDLISAVMLKVNGSMQIDFEGEQLDFTPPWRRVTMLDAIKEAAGLDFSLIKSDEDACQAAWQLGLEVKAGASRGELINEIFEQFVEDKLIQPTFVYGHPVEVSPLAKRNLETPEFTDRFELFIMQREIANAFSELNDPIDQKERFIKQVEKRAGGDAEAHMMDEDYINALEYGMPPAGGMGIGIDRLVMLMTGSPSIRDVILFPTLRPRSSEA.

Mg(2+) is bound by residues Glu-400 and Glu-407.

This sequence belongs to the class-II aminoacyl-tRNA synthetase family. In terms of assembly, homodimer. It depends on Mg(2+) as a cofactor.

The protein resides in the cytoplasm. It catalyses the reaction tRNA(Lys) + L-lysine + ATP = L-lysyl-tRNA(Lys) + AMP + diphosphate. This chain is Lysine--tRNA ligase, found in Syntrophomonas wolfei subsp. wolfei (strain DSM 2245B / Goettingen).